The primary structure comprises 97 residues: RxLR effector protein PexRD21 (97 aa).

The first 21 residues, 1–21 (MRLSYILVVVIAVTLQACVCA), serve as a signal peptide directing secretion. Positions 48 to 66 (RLLRGVKKRTAEREVQEER) match the RxLR-dEER motif.

The protein belongs to the RxLR effector family.

The protein resides in the secreted. It localises to the host cell membrane. Its function is as follows. Effector that is involved in host plant infection. Contributes to virulence during the early infection stage, by inhibiting plant defense responses induced by both PAMP-triggered immunity (PTI) and effector-triggered immunity (ETI). This Phytophthora infestans (strain T30-4) (Potato late blight agent) protein is RxLR effector protein PexRD21.